Here is a 56-residue protein sequence, read N- to C-terminus: UPF0434 protein CbuG_1535 (56 aa).

Belongs to the UPF0434 family.

The polypeptide is UPF0434 protein CbuG_1535 (Coxiella burnetii (strain CbuG_Q212) (Coxiella burnetii (strain Q212))).